Consider the following 2278-residue polypeptide: MRGHQFKSWIFELREILREIKNSHHFLDSWTQFNSVGSFIHIFFHQERFLKLFDPRIWSILLSRNSQGSTSNRYFTIKGVILFVVAVLIYRINNRNMVERKNLYLIGLLPIPMNSIGPRNDTLEESVGSSNINRLIVSLLYLPKGKKISESCFLNPKESTWVLPITKKCSMPESNWGSRWWRNWIGKKRDSSCKISNETVAGIEILFKEKDLKYLEFLFVYYMDDPIRKDHDWELFDRLSLRKSRNRINLNSGLLFEILVKHWISYLMSAFREKIPIEVEGFFKQQGAGSTIQSNDIEHVSHLFSRNKWAISLQNCAQFHMWQFRQDLFVSWGKNPPESDFLRNVSRENWIWLDNVWLVNKDRFFSKVQNVSSNIQYDSTRSSFVQVTDSSQLKGSSDQSRDHLDSISNEDSEYHTLINQREIQQRKERSILWDPSFLQTERKEIESGRFPKCLSGYSSMSRLFTEREKQMINHLFPEEIEEFLGNPTRSVRSFFSDRWSELHLGSNPTERSTRDQKLLKKQQDLSFVPSRRSEKKEMVNIFKIITYLQNTVSIHPISSDPGCDMVPKDEPDMDSSNKISFLNKNPFFDLFHLFHDRNRGGYTLHYDFASEERFQEMADLFTLSITEPDLVYHKGFAFSIDSCGLDQKQFLNEARDESKKKSLLVLPPIFYEENESFSRRIRKKWVRISCGNDLEDPKPKIVVFASNNIMEAVTQYRLIRNLIQIQYSTYGYIRNVLNRFFLMNRSDRNFEYGIQRDQIGKDTLNHRTIMKYTINQYLSNLKKSQKKWFEPLILISRTERSMNRDPDAYRYKWSNGSKSFQEHLEQSVSEQKSRFQVVFDRLRINQYSIDWSEVIDKKDLSKSLRFFLSKSLLFLSKLLLFLSNSLPFFCVSFGNIPIHRSEIYIYEELKGPNDQLCNQLLESIGLQIVHLKKLKPFLLDDHDTSQKSKFLINGGTISPFLFNKIPKWMIDSFHTRNNRRKSFDNPDSYFSMIFHDQDNWLNPVKPFHRSSLISSFYKANRLRFLNNPHHFCFYWNTRFPFSVEKARINNSDFTYGQFLNILFIRNKIFSLCVGKKKHAFWGRDTISPIESQVSNIFIPNDFPQSGDETYNLYKSFHFPSRSDPFVRRAIYSIADISGTPLTEGQIVNFERTYCQPLSDMNLSDSEGKNLHQYLNFNSNMGLIHTPCSEKDLSSEKRKKWSLCLKKCVEKGQMYRTFQRDSAFSTLSKWNLFQTYMPWFLTSTGYKYLNLIFLDTFSDLLPILSSSQKFVSIFPDIMHGSGISWRILQKKLCLPQWNLISEISSKCLHNLLLSEEMIHRNNESPLISTHLRSPNAREFLYSILFLLLVAGYLVRTHLLFVSRASSELQTEFEKVKSLMIPSSMIELRKLLDRYPTSEPNSFWLKNLFLVALEQLGDSLEEIRGSASGGNMLGPAYGVKSIRSKKKDWNINLIEIIDLIPNPINRITFSRNTRHLSHTSKEIYSLIRKRKNVNGDWIDEKIESWVANSDSIDDEEREFLVQFSTLTTENRIDQILLSLTHSDHLSKNDSGYQMIEQPGAIYLRYLVDIHKKHLMNYEFNPSCLAERRIFLAHYQTITYSQTSCGENSFHFPSPGKPFSLRLALSPSRGILVIGSIGTGRSYLVKYLATNSYVPFITVFLNKFLDNKSKGFLLDEIDIDDSDDIDDSDNLDASDDIDRDLDTELELLTRMNGLTVDMMPEIDRFYITLQFELAKAMSPCIIWIPNIHDLDVNESNDLSLGLLVNHLSRDCERCSTRNILVIASTHIPQKVDPALIAPNKLNTCIKIRRLLIPQQRKHFFTLSYTRGFHLEKKMFHTNGFGSITMGSNARDLVALTNEVLSISITQKKSIIDTNTIRSALHRQTWDLRSQVRSVQDHGILFYQIGRAVAQNVLLSNCPIDPISIYMKKKSCNEGDSYLYKWYFELGTSMKRLTILLYLLSCSAGSVAQDLWSLSVPDEKNGITSYGLVENDSDLVHGLLEVEGALVGSSRTEKDCSQFDNDRVTLLLRPEPRNPLDMMQKGSWSILDQRFLYEKYESEFEEGEGEGALDPQEDLFNHIVWAPRIWRPWGFLFDCIERPNELGFPYWSRSFRGKRIIYDEEDELQENDSGFLQSGTMQYQTRDRSQGLFRISQFIWDPADPLFFLFKDQPPGSVFSHRELFADEEMSKGLLTSQTDPPTSIYKRWFIKNTQEKHFELLINRQRWLRTNSSLSNGSFRSNTLSESYQYLSNLFLSNGTLLDQMPKTLLRKRWLFPDEMKIGFM.

An ATP-binding site is contributed by Gly-1632–Ser-1639.

The protein belongs to the Ycf2 family.

The protein resides in the plastid. It localises to the chloroplast stroma. Its function is as follows. Probable ATPase of unknown function. Its presence in a non-photosynthetic plant (Epifagus virginiana) and experiments in tobacco indicate that it has an essential function which is probably not related to photosynthesis. The chain is Protein Ycf2 from Solanum bulbocastanum (Wild potato).